Here is a 336-residue protein sequence, read N- to C-terminus: Succinylglutamate desuccinylase (336 aa).

Residues histidine 59, glutamate 62, and histidine 151 each contribute to the Zn(2+) site. The active site involves glutamate 215.

This sequence belongs to the AspA/AstE family. Succinylglutamate desuccinylase subfamily. It depends on Zn(2+) as a cofactor.

It carries out the reaction N-succinyl-L-glutamate + H2O = L-glutamate + succinate. It functions in the pathway amino-acid degradation; L-arginine degradation via AST pathway; L-glutamate and succinate from L-arginine: step 5/5. Functionally, transforms N(2)-succinylglutamate into succinate and glutamate. This chain is Succinylglutamate desuccinylase, found in Pseudomonas fluorescens (strain ATCC BAA-477 / NRRL B-23932 / Pf-5).